The chain runs to 309 residues: Serine/threonine-protein phosphatase 2A catalytic subunit beta isoform (309 aa).

Positions 57, 59, 85, and 117 each coordinate Mn(2+). Residue histidine 118 is the Proton donor of the active site. Positions 167 and 241 each coordinate Mn(2+). Tyrosine 307 carries the post-translational modification Phosphotyrosine. Leucine 309 carries the leucine methyl ester modification.

The protein belongs to the PPP phosphatase family. PP-1 subfamily. PP2A consists of a common heterodimeric core enzyme (composed of a 36 kDa catalytic subunit (subunit C) and a 65 kDa constant regulatory subunit (PR65) (subunit A)) that associates with a variety of regulatory subunits. Proteins that associate with the core dimer include three families of regulatory subunits B (the R2/B/PR55/B55, R3/B''/PR72/PR130/PR59 and R5/B'/B56 families), the 48 kDa variable regulatory subunit, viral proteins, and cell signaling molecules. Binds PPME1. May indirectly interact with SGO1, most probably through regulatory B56 subunits. Found in a complex with at least ARL2, PPP2CB, PPP2R1A, PPP2R2A, PPP2R5E and TBCD. Interacts with TBCD. Interacts with CTTNBP2NL. Interacts with PTPA. Part of the core of STRIPAK complexes composed of PP2A catalytic and scaffolding subunits, the striatins (PP2A regulatory subunits), the striatin-associated proteins MOB4, STRIP1 and STRIP2, PDCD10 and members of the STE20 kinases, such as STK24 and STK26. Requires Mn(2+) as cofactor. In terms of processing, reversibly methyl esterified on Leu-309 by leucine carboxyl methyltransferase 1 (LCMT1) and protein phosphatase methylesterase 1 (PPME1). Carboxyl methylation influences the affinity of the catalytic subunit for the different regulatory subunits, thereby modulating the PP2A holoenzyme's substrate specificity, enzyme activity and cellular localization. Post-translationally, phosphorylation of either threonine (by autophosphorylation-activated protein kinase) or tyrosine results in inactivation of the phosphatase. Auto-dephosphorylation has been suggested as a mechanism for reactivation. May be monoubiquitinated by NOSIP.

The protein resides in the cytoplasm. It localises to the nucleus. The protein localises to the chromosome. Its subcellular location is the centromere. It is found in the cytoskeleton. The protein resides in the spindle pole. The enzyme catalyses O-phospho-L-seryl-[protein] + H2O = L-seryl-[protein] + phosphate. It catalyses the reaction O-phospho-L-threonyl-[protein] + H2O = L-threonyl-[protein] + phosphate. Its function is as follows. Catalytic subunit of protein phosphatase 2A (PP2A), a serine/threonine phosphatase involved in the regulation of a wide variety of enzymes, signal transduction pathways, and cellular events. PP2A can modulate the activity of phosphorylase B kinase, casein kinase 2, mitogen-stimulated S6 kinase, and MAP-2 kinase. Part of the striatin-interacting phosphatase and kinase (STRIPAK) complexes. STRIPAK complexes have critical roles in protein (de)phosphorylation and are regulators of multiple signaling pathways including Hippo, MAPK, nuclear receptor and cytoskeleton remodeling. Different types of STRIPAK complexes are involved in a variety of biological processes such as cell growth, differentiation, apoptosis, metabolism and immune regulation. This is Serine/threonine-protein phosphatase 2A catalytic subunit beta isoform (PPP2CB) from Bos taurus (Bovine).